Consider the following 71-residue polypeptide: Small ribosomal subunit protein bS21 (71 aa).

Basic residues predominate over residues 48–59; that stretch reads EKASLAKRHAKR. Residues 48-71 form a disordered region; it reads EKASLAKRHAKRNARENARNTRLY. Basic and acidic residues predominate over residues 60 to 71; sequence NARENARNTRLY.

This sequence belongs to the bacterial ribosomal protein bS21 family.

The protein is Small ribosomal subunit protein bS21 of Actinobacillus pleuropneumoniae serotype 5b (strain L20).